The following is a 160-amino-acid chain: NADH-quinone oxidoreductase subunit I (160 aa).

4Fe-4S ferredoxin-type domains are found at residues 51–81 (LRRY…IEAA) and 91–120 (VRYD…EGPN). 8 residues coordinate [4Fe-4S] cluster: cysteine 61, cysteine 64, cysteine 67, cysteine 71, cysteine 100, cysteine 103, cysteine 106, and cysteine 110.

This sequence belongs to the complex I 23 kDa subunit family. As to quaternary structure, NDH-1 is composed of 14 different subunits. Subunits NuoA, H, J, K, L, M, N constitute the membrane sector of the complex. [4Fe-4S] cluster serves as cofactor.

The protein localises to the cell inner membrane. The catalysed reaction is a quinone + NADH + 5 H(+)(in) = a quinol + NAD(+) + 4 H(+)(out). Functionally, NDH-1 shuttles electrons from NADH, via FMN and iron-sulfur (Fe-S) centers, to quinones in the respiratory chain. The immediate electron acceptor for the enzyme in this species is believed to be ubiquinone. Couples the redox reaction to proton translocation (for every two electrons transferred, four hydrogen ions are translocated across the cytoplasmic membrane), and thus conserves the redox energy in a proton gradient. The polypeptide is NADH-quinone oxidoreductase subunit I (Anaplasma marginale (strain St. Maries)).